The following is a 194-amino-acid chain: 7-methyl-GTP pyrophosphatase (194 aa).

The Proton acceptor role is filled by Asp67.

It belongs to the Maf family. YceF subfamily. The cofactor is a divalent metal cation.

The protein resides in the cytoplasm. It catalyses the reaction N(7)-methyl-GTP + H2O = N(7)-methyl-GMP + diphosphate + H(+). Functionally, nucleoside triphosphate pyrophosphatase that hydrolyzes 7-methyl-GTP (m(7)GTP). May have a dual role in cell division arrest and in preventing the incorporation of modified nucleotides into cellular nucleic acids. The chain is 7-methyl-GTP pyrophosphatase from Pseudoalteromonas atlantica (strain T6c / ATCC BAA-1087).